The chain runs to 461 residues: Cysteine--tRNA ligase (461 aa).

Zn(2+) is bound at residue cysteine 28. Residues isoleucine 30–histidine 40 carry the 'HIGH' region motif. 3 residues coordinate Zn(2+): cysteine 209, histidine 234, and glutamate 238. The 'KMSKS' region motif lies at lysine 266–serine 270. Residue lysine 269 coordinates ATP.

The protein belongs to the class-I aminoacyl-tRNA synthetase family. As to quaternary structure, monomer. Zn(2+) serves as cofactor.

The protein resides in the cytoplasm. It carries out the reaction tRNA(Cys) + L-cysteine + ATP = L-cysteinyl-tRNA(Cys) + AMP + diphosphate. This chain is Cysteine--tRNA ligase, found in Yersinia pseudotuberculosis serotype IB (strain PB1/+).